Reading from the N-terminus, the 124-residue chain is Cytoinsectotoxin-4 (124 aa).

The signal sequence occupies residues methionine 1–alanine 19. A propeptide spanning residues serine 20–arginine 62 is cleaved from the precursor. Phenylalanine 123 carries the phenylalanine amide modification.

This sequence belongs to the cationic peptide 06 (cytoinsectotoxin) family. Expressed by the venom gland.

It localises to the secreted. Insecticidal and antimicrobial peptide. Has insecticidal activity against larvae of flesh fly S.carnaria. Has antibacterial activity against Gram-positive bacterium B.subtilis B-501 (MIC=2.5 uM) and Gram-negative bacterium E.coli DH5alpha (MIC=10 uM). The sequence is that of Cytoinsectotoxin-4 from Lachesana tarabaevi (Spider).